A 75-amino-acid polypeptide reads, in one-letter code: Protease B inhibitor 2 (75 aa).

Residue Thr-74 is modified to Phosphothreonine.

This sequence belongs to the protease inhibitor I9 family. As to quaternary structure, part of the heterodimeric LMA1 complex together with the thioredoxin II/TRX2. LMA1 binds to the ATPase SEC18.

It localises to the cytoplasm. Cytosolic inhibitor of vacuolar proteinase B (yscB), probably regulating protease B activity during limited proteolysis. PBI2 is a component of the LMA1 complex, which is involved in the facilitation of vesicle fusion such as homotypic vacuole and ER-derived COPII vesicle fusion with the Golgi. The sequence is that of Protease B inhibitor 2 (PBI2) from Saccharomyces cerevisiae (strain ATCC 204508 / S288c) (Baker's yeast).